The chain runs to 507 residues: RNA-binding protein Nova-1 (507 aa).

Residues 1–44 (MMAAAPIQQNGTHTGVPIDLDPPDSRKRPLEAPPEAGSTKRTNT) are disordered. Residues 27–43 (KRPLEAPPEAGSTKRTN) carry the Bipartite nuclear localization signal motif. The region spanning 49–116 (QYFLKVLIPS…EALNAVHGFI (68 aa)) is the KH 1 domain. The disordered stretch occupies residues 139–171 (QTTVNPDRIKQTLPSSPTTTKSSPSDPMTTSRA). Residues 150-169 (TLPSSPTTTKSSPSDPMTTS) show a composition bias toward low complexity. At Ser-154 the chain carries Phosphoserine. KH domains lie at 171–237 (ANQV…VELI) and 421–488 (KDVV…QYLI). Positions 419–503 (GSKDVVEIAV…YEQGVRAANP (85 aa)) are required for RNA binding.

Interacts with PTBP2; the interaction is direct. Expressed in cerebellum, brain stem, hippocampus, and frontal cortex.

The protein localises to the nucleus. Functionally, functions to regulate alternative splicing in neurons by binding pre-mRNA in a sequence-specific manner to activate exon inclusion or exclusion. It binds specifically to the sequences 5'-YCAY-3' and regulates splicing in only a subset of regulated exons. Binding to an exonic 5'-YCAY-3' cluster changes the protein complexes assembled on pre-mRNA, blocking U1 snRNP binding and exon inclusion, whereas binding to an intronic 5'-YCAY-3' cluster enhances spliceosome assembly and exon inclusion. Binding to 5'-YCAY-3' clusters results in a local and asymmetric action to regulate spliceosome assembly and alternative splicing in neurons. Binding to an exonic 5'-YCAY-3' cluster changed the protein complexes assembled on pre-mRNA, blocking U1 snRNP (small nuclear ribonucleoprotein) binding and exon inclusion, whereas binding to an intronic 5'-YCAY-3' cluster enhanced spliceosome assembly and exon inclusion. With NOVA1, they perform unique biological functions in different brain areas and cell types. Autoregulates its own expression by acting as a splicing repressor. Acts to activate the inclusion of exon E3A in the glycine receptor alpha-2 chain and of exon E9 in gamma-aminobutyric-acid receptor gamma-2 subunit via a distal downstream UCAU-rich intronic splicing enhancer. Acts to regulate a novel glycine receptor alpha-2 chain splice variant (alpha-2N) in developing spinal cord. The sequence is that of RNA-binding protein Nova-1 from Homo sapiens (Human).